A 95-amino-acid polypeptide reads, in one-letter code: Co-chaperonin GroES (95 aa).

It belongs to the GroES chaperonin family. Heptamer of 7 subunits arranged in a ring. Interacts with the chaperonin GroEL.

It localises to the cytoplasm. Functionally, together with the chaperonin GroEL, plays an essential role in assisting protein folding. The GroEL-GroES system forms a nano-cage that allows encapsulation of the non-native substrate proteins and provides a physical environment optimized to promote and accelerate protein folding. GroES binds to the apical surface of the GroEL ring, thereby capping the opening of the GroEL channel. This is Co-chaperonin GroES from Streptococcus equi subsp. equi (strain 4047).